A 459-amino-acid polypeptide reads, in one-letter code: Peptidyl-prolyl cis-trans isomerase FKBP4 (459 aa).

At methionine 1 the chain carries N-acetylmethionine; in peptidyl-prolyl cis-trans isomerase FKBP4; alternate. The disordered stretch occupies residues 1-24; the sequence is MTAEEMKATESGAQSAPLPMEGVD. Threonine 2 is modified (N-acetylthreonine; in peptidyl-prolyl cis-trans isomerase FKBP4, N-terminally processed; partial). The PPIase FKBP-type 1 domain occupies 50 to 138; that stretch reads GDRVFVHYTG…VFEVELFEFK (89 aa). Threonine 143 carries the phosphothreonine; by CK2 modification. Positions 167–253 constitute a PPIase FKBP-type 2 domain; the sequence is GAIVEVALEG…KYELHLKSFE (87 aa). Tyrosine 220 carries the post-translational modification Phosphotyrosine. Residues 267–400 are interaction with tubulin; the sequence is LEQSTIVKER…TQLAVCQQRI (134 aa). TPR repeat units lie at residues 270–303, 319–352, and 353–386; these read STIV…LEYE, LASH…DSNN, and EKGL…YPNN. Lysine 282 carries the post-translational modification N6-acetyllysine. Arginine 373 is subject to Omega-N-methylarginine. The tract at residues 421–459 is disordered; sequence EENKAKAEASSGDHPTDTEMKEEQKSNTAGSQSQVETEA. The span at 434 to 445 shows a compositional bias: basic and acidic residues; that stretch reads HPTDTEMKEEQK. Phosphothreonine is present on threonine 436. Lysine 441 participates in a covalent cross-link: Glycyl lysine isopeptide (Lys-Gly) (interchain with G-Cter in SUMO1). A compositionally biased stretch (polar residues) spans 446-459; the sequence is SNTAGSQSQVETEA. Phosphoserine is present on residues serine 451 and serine 453.

Homodimer. Interacts with GLMN. Associates with HSP90AA1 and HSP70 in steroid hormone receptor complexes. Also interacts with peroxisomal phytanoyl-CoA alpha-hydroxylase (PHYH). Interacts with NR3C1 and dynein. Interacts with HSF1 in the HSP90 complex. Associates with tubulin. Interacts with MAPT/TAU. Interacts (via TPR domain) with S100A1, S100A2 and S100A6; the interaction is Ca(2+) dependent. Interaction with S100A1 and S100A2 (but not with S100A6) leads to inhibition of FKBP4-HSP90 interaction. Interacts with dynein; causes partially NR3C1 transport to the nucleus. Phosphorylation by CK2 results in loss of HSP90 binding activity. In terms of tissue distribution, widely expressed.

It is found in the cytoplasm. Its subcellular location is the cytosol. The protein localises to the mitochondrion. It localises to the nucleus. The protein resides in the cytoskeleton. It is found in the cell projection. Its subcellular location is the axon. The enzyme catalyses [protein]-peptidylproline (omega=180) = [protein]-peptidylproline (omega=0). With respect to regulation, inhibited by FK506. Its function is as follows. Immunophilin protein with PPIase and co-chaperone activities. Component of steroid receptors heterocomplexes through interaction with heat-shock protein 90 (HSP90). May play a role in the intracellular trafficking of heterooligomeric forms of steroid hormone receptors between cytoplasm and nuclear compartments. The isomerase activity controls neuronal growth cones via regulation of TRPC1 channel opening. Also acts as a regulator of microtubule dynamics by inhibiting MAPT/TAU ability to promote microtubule assembly. May have a protective role against oxidative stress in mitochondria. The chain is Peptidyl-prolyl cis-trans isomerase FKBP4 (FKBP4) from Homo sapiens (Human).